Reading from the N-terminus, the 356-residue chain is Competence protein ComGA (356 aa).

144–151 (GPTGSGKT) is a binding site for ATP.

This sequence belongs to the GSP E family.

It localises to the cell membrane. Its function is as follows. Required for uptake of DNA by competent cells. This Bacillus subtilis (strain 168) protein is Competence protein ComGA (comGA).